A 329-amino-acid polypeptide reads, in one-letter code: Beta-ribofuranosylphenol 5'-phosphate synthase (329 aa).

The protein belongs to the beta-RFA-P synthase family. Homodimer. Mg(2+) serves as cofactor.

It carries out the reaction 5-phospho-alpha-D-ribose 1-diphosphate + 4-hydroxybenzoate + H(+) = 4-(beta-D-ribofuranosyl)phenol 5'-phosphate + CO2 + diphosphate. The enzyme catalyses 4-aminobenzoate + 5-phospho-alpha-D-ribose 1-diphosphate + H(+) = 4-(beta-D-ribofuranosyl)aminobenzene 5'-phosphate + CO2 + diphosphate. It participates in cofactor biosynthesis; 5,6,7,8-tetrahydromethanopterin biosynthesis. Functionally, catalyzes the condensation of 4-hydroxybenzoate (HB) with 5-phospho-alpha-D-ribose 1-diphosphate (PRPP) to produce beta-ribofuranosylphenol 5'-phosphate (beta-RFH-P). Also catalyzes the condensation of 4-aminobenzoate (pABA) with PRPP to produce beta-ribofuranosylaminobenzene 5'-phosphate (beta-RFA-P). Only 4-hydroxybenzoate is known to be biosynthesized by methanogenic archaea, but 4-aminobenzoate can be used as substrate by growing methanogens when it is present in the growth medium. The protein is Beta-ribofuranosylphenol 5'-phosphate synthase of Methanothermobacter thermautotrophicus (strain ATCC 29096 / DSM 1053 / JCM 10044 / NBRC 100330 / Delta H) (Methanobacterium thermoautotrophicum).